The sequence spans 247 residues: DNA polymerase sliding clamp (247 aa).

Belongs to the PCNA family. In terms of assembly, homotrimer. The subunits circularize to form a toroid; DNA passes through its center. Replication factor C (RFC) is required to load the toroid on the DNA.

Functionally, sliding clamp subunit that acts as a moving platform for DNA processing. Responsible for tethering the catalytic subunit of DNA polymerase and other proteins to DNA during high-speed replication. The chain is DNA polymerase sliding clamp from Methanocorpusculum labreanum (strain ATCC 43576 / DSM 4855 / Z).